Here is a 231-residue protein sequence, read N- to C-terminus: Phosphoheptose isomerase (231 aa).

Residues 35–190 (LAAVLGGGGR…CAAFDAALER (156 aa)) enclose the SIS domain. 50-52 (NGG) is a substrate binding site. H59 and E63 together coordinate Zn(2+). Residues E63, 92-93 (ND), 118-120 (STS), S123, and Q170 each bind substrate. The Zn(2+) site is built by Q170 and H178. 2 stretches are compositionally biased toward low complexity: residues 197–206 (AAGSAASTGR) and 214–225 (ASTGRAAGAGRA). The interval 197–231 (AAGSAASTGRAARRERAASTGRAAGAGRAAQRKRR) is disordered.

The protein belongs to the SIS family. GmhA subfamily. Zn(2+) serves as cofactor.

It is found in the cytoplasm. The catalysed reaction is 2 D-sedoheptulose 7-phosphate = D-glycero-alpha-D-manno-heptose 7-phosphate + D-glycero-beta-D-manno-heptose 7-phosphate. Its pathway is carbohydrate biosynthesis; D-glycero-D-manno-heptose 7-phosphate biosynthesis; D-glycero-alpha-D-manno-heptose 7-phosphate and D-glycero-beta-D-manno-heptose 7-phosphate from sedoheptulose 7-phosphate: step 1/1. Functionally, catalyzes the isomerization of sedoheptulose 7-phosphate in D-glycero-D-manno-heptose 7-phosphate. This is Phosphoheptose isomerase from Streptomyces coelicolor (strain ATCC BAA-471 / A3(2) / M145).